The chain runs to 286 residues: Acetyl-coenzyme A carboxylase carboxyl transferase subunit beta (286 aa).

One can recognise a CoA carboxyltransferase N-terminal domain in the interval 26 to 286 (LWEKCVKCDA…LAKFTRRAAV (261 aa)). Residues Cys-30, Cys-33, Cys-49, and Cys-52 each coordinate Zn(2+). The segment at 30-52 (CVKCDAVLYKPELEKNLDVCPKC) adopts a C4-type zinc-finger fold.

Belongs to the AccD/PCCB family. Acetyl-CoA carboxylase is a heterohexamer composed of biotin carboxyl carrier protein (AccB), biotin carboxylase (AccC) and two subunits each of ACCase subunit alpha (AccA) and ACCase subunit beta (AccD). Zn(2+) is required as a cofactor.

Its subcellular location is the cytoplasm. The enzyme catalyses N(6)-carboxybiotinyl-L-lysyl-[protein] + acetyl-CoA = N(6)-biotinyl-L-lysyl-[protein] + malonyl-CoA. It participates in lipid metabolism; malonyl-CoA biosynthesis; malonyl-CoA from acetyl-CoA: step 1/1. Its function is as follows. Component of the acetyl coenzyme A carboxylase (ACC) complex. Biotin carboxylase (BC) catalyzes the carboxylation of biotin on its carrier protein (BCCP) and then the CO(2) group is transferred by the transcarboxylase to acetyl-CoA to form malonyl-CoA. The sequence is that of Acetyl-coenzyme A carboxylase carboxyl transferase subunit beta from Cellvibrio japonicus (strain Ueda107) (Pseudomonas fluorescens subsp. cellulosa).